Here is a 474-residue protein sequence, read N- to C-terminus: Probable glycine dehydrogenase (decarboxylating) subunit 2 (474 aa).

Residue Lys-266 is modified to N6-(pyridoxal phosphate)lysine.

It belongs to the GcvP family. C-terminal subunit subfamily. In terms of assembly, the glycine cleavage system is composed of four proteins: P, T, L and H. In this organism, the P 'protein' is a heterodimer of two subunits. It depends on pyridoxal 5'-phosphate as a cofactor.

The catalysed reaction is N(6)-[(R)-lipoyl]-L-lysyl-[glycine-cleavage complex H protein] + glycine + H(+) = N(6)-[(R)-S(8)-aminomethyldihydrolipoyl]-L-lysyl-[glycine-cleavage complex H protein] + CO2. The glycine cleavage system catalyzes the degradation of glycine. The P protein binds the alpha-amino group of glycine through its pyridoxal phosphate cofactor; CO(2) is released and the remaining methylamine moiety is then transferred to the lipoamide cofactor of the H protein. The polypeptide is Probable glycine dehydrogenase (decarboxylating) subunit 2 (Thermus thermophilus (strain ATCC 27634 / DSM 579 / HB8)).